The sequence spans 160 residues: MGVTKKPDLNDPVLRAKLAKGMGHNYYGEPAWPNDLLYIFPVVILGTIACNVGLAVLEPSMIGEPADPFATPLEILPEWYFFPVFQILRTVPNKLLGVLLMASVPAGLLTVPFLENVNKFQNPFRRPVATTVFLVGTVVALWLGIGATLPIDKSLTLGLF.

Transmembrane regions (helical) follow at residues leucine 36 to valine 56, leucine 95 to glutamate 115, and threonine 131 to isoleucine 151.

The protein belongs to the cytochrome b family. PetD subfamily. In terms of assembly, the 4 large subunits of the cytochrome b6-f complex are cytochrome b6, subunit IV (17 kDa polypeptide, petD), cytochrome f and the Rieske protein, while the 4 small subunits are petG, petL, petM and petN. The complex functions as a dimer.

The protein resides in the plastid. Its subcellular location is the chloroplast thylakoid membrane. Functionally, component of the cytochrome b6-f complex, which mediates electron transfer between photosystem II (PSII) and photosystem I (PSI), cyclic electron flow around PSI, and state transitions. This chain is Cytochrome b6-f complex subunit 4, found in Spinacia oleracea (Spinach).